The chain runs to 487 residues: ATP synthase subunit beta (487 aa).

164-171 (GGAGVGKT) contacts ATP.

This sequence belongs to the ATPase alpha/beta chains family. F-type ATPases have 2 components, CF(1) - the catalytic core - and CF(0) - the membrane proton channel. CF(1) has five subunits: alpha(3), beta(3), gamma(1), delta(1), epsilon(1). CF(0) has four main subunits: a(1), b(1), b'(1) and c(9-12).

The protein localises to the cellular thylakoid membrane. It carries out the reaction ATP + H2O + 4 H(+)(in) = ADP + phosphate + 5 H(+)(out). In terms of biological role, produces ATP from ADP in the presence of a proton gradient across the membrane. The catalytic sites are hosted primarily by the beta subunits. This Synechococcus sp. (strain CC9605) protein is ATP synthase subunit beta.